The following is a 31-amino-acid chain: Cyclotide mech-6 (31 aa).

The segment at residues 1-31 (GVIPCGESCVFIPCISSVVGCTCKNKVCYRN) is a cross-link (cyclopeptide (Gly-Asn)). Intrachain disulfides connect cysteine 5-cysteine 21, cysteine 9-cysteine 23, and cysteine 14-cysteine 28.

This is a cyclic peptide. In terms of processing, contains 3 disulfide bonds.

Probably participates in a plant defense mechanism (Potential). Binds to and induces leakage in phospholipd membranes, particularly ones containing 1-palmitoyl-2-oleophosphatidylethanolamine (POPE). This is Cyclotide mech-6 from Melicytus chathamicus (Chatham Island mahoe).